The primary structure comprises 603 residues: NADPH-dependent diflavin oxidoreductase 1 (603 aa).

A Flavodoxin-like domain is found at 10 to 155 (VTILYGSETG…YYSEWETNLL (146 aa)). Residues 16 to 21 (SETGNA), 64 to 67 (STTG), 102 to 111 (IGDSSYPKFN), and Glu-137 each bind FMN. In terms of domain architecture, FAD-binding FR-type spans 209–451 (TNLLLGSVKA…HKSNLKFELP (243 aa)). FAD is bound by residues Arg-359, 390–393 (RLFS), and 422–425 (GLCT). Residues Thr-465 and 521 to 522 (SR) contribute to the NADP(+) site. Residue Trp-603 coordinates FAD.

This sequence belongs to the NADPH-dependent diflavin oxidoreductase NDOR1 family. In the N-terminal section; belongs to the flavodoxin family. It in the C-terminal section; belongs to the flavoprotein pyridine nucleotide cytochrome reductase family. Interacts with DRE2; as part of the cytosolic iron-sulfur (Fe-S) protein assembly (CIA) machinery. The cofactor is FAD. Requires FMN as cofactor.

The protein resides in the cytoplasm. The protein localises to the mitochondrion. It catalyses the reaction 2 oxidized [2Fe-2S]-[protein] + NADPH = 2 reduced [2Fe-2S]-[protein] + NADP(+) + H(+). NADPH-dependent reductase which is a central component of the cytosolic iron-sulfur (Fe-S) protein assembly (CIA) machinery. Transfers electrons from NADPH via its FAD and FMN prosthetic groups to the [2Fe-2S] cluster of DRE2, another key component of the CIA machinery. In turn, this reduced cluster provides electrons for assembly of cytosolic iron-sulfur cluster proteins. Positively controls H(2)O(2)-induced cell death. This Debaryomyces hansenii (strain ATCC 36239 / CBS 767 / BCRC 21394 / JCM 1990 / NBRC 0083 / IGC 2968) (Yeast) protein is NADPH-dependent diflavin oxidoreductase 1.